The sequence spans 129 residues: Large ribosomal subunit protein bL17 (129 aa).

This sequence belongs to the bacterial ribosomal protein bL17 family. In terms of assembly, part of the 50S ribosomal subunit. Contacts protein L32.

In Yersinia pseudotuberculosis serotype O:1b (strain IP 31758), this protein is Large ribosomal subunit protein bL17.